A 279-amino-acid polypeptide reads, in one-letter code: MGTPEFPDLGKHCSVDVCKQIDFLPFTCDRCLQVFCLDHRSYMKHSCPKGDREDVTVVICPLCAKGVRLNPNEDPNITWEKHVNTDCDPSNYEKATKKKKCPVPRCKEYLTFSNTIKCRDCNVDHCLKHRFGPDHTCPGPRKLPFMGFLSSSTTRKEAKTTRPNKAHPSTSSSSSSSRWSNLLSSAEAGISRLGNDISQKLQFSSSKDNGIVEVCPQCGAKFSSVTSLVEHVEKTHERNKKQNHGNVTVDVCPRCSRGFRDPVDLVNHIERDHRGTSKA.

2 consecutive AN1-type zinc fingers follow at residues 7–55 (PDLG…REDV) and 95–145 (ATKK…KLPF). Zn(2+)-binding residues include Cys-13, Cys-18, Cys-28, Cys-31, Cys-36, His-39, His-45, Cys-47, Cys-101, Cys-106, Cys-118, Cys-121, Cys-126, His-129, His-135, and Cys-137. The interval 152-178 (STTRKEAKTTRPNKAHPSTSSSSSSSR) is disordered. Over residues 169–178 (STSSSSSSSR) the composition is skewed to low complexity. C2H2-type zinc fingers lie at residues 213 to 236 (EVCP…EKTH) and 250 to 273 (DVCP…ERDH).

Functionally, may be involved in environmental stress response. This is Zinc finger AN1 and C2H2 domain-containing stress-associated protein 11 (SAP11) from Arabidopsis thaliana (Mouse-ear cress).